We begin with the raw amino-acid sequence, 115 residues long: Thionin-like protein 2 (115 aa).

Positions 1 to 20 (MLVAVMIVMVIGNLLAQTAA) are cleaved as a signal peptide.

Belongs to the plant thionin (TC 1.C.44) family. In terms of processing, is disulfide-linked.

The protein localises to the secreted. Functionally, may be involved in plant defense. The sequence is that of Thionin-like protein 2 from Arabidopsis thaliana (Mouse-ear cress).